Here is a 122-residue protein sequence, read N- to C-terminus: Large ribosomal subunit protein uL14 (122 aa).

It belongs to the universal ribosomal protein uL14 family. In terms of assembly, part of the 50S ribosomal subunit. Forms a cluster with proteins L3 and L19. In the 70S ribosome, L14 and L19 interact and together make contacts with the 16S rRNA in bridges B5 and B8.

Binds to 23S rRNA. Forms part of two intersubunit bridges in the 70S ribosome. The protein is Large ribosomal subunit protein uL14 of Maricaulis maris (strain MCS10) (Caulobacter maris).